The primary structure comprises 539 residues: Berberine bridge enzyme-like 21 (539 aa).

The first 26 residues, 1 to 26, serve as a signal peptide directing secretion; sequence MIATQTFVSVFFFVFFLVSLPFFSSA. A disulfide bond links Cys41 and Cys104. An N-linked (GlcNAc...) asparagine glycan is attached at Asn79. Residues 82–256 form the FAD-binding PCMH-type domain; sequence STPKPAIIVT…LGYKVKLVPV (175 aa). Positions 119–181 form a cross-link, 6-(S-cysteinyl)-8alpha-(pros-histidyl)-FAD (His-Cys); it reads HDYEGLSYIS…KVHGFPAGVC (63 aa). The N-linked (GlcNAc...) asparagine glycan is linked to Asn340.

Belongs to the oxygen-dependent FAD-linked oxidoreductase family. Requires FAD as cofactor. Post-translationally, the FAD cofactor is bound via a bicovalent 6-S-cysteinyl, 8alpha-N1-histidyl FAD linkage.

The protein localises to the secreted. It is found in the cell wall. This Arabidopsis thaliana (Mouse-ear cress) protein is Berberine bridge enzyme-like 21.